The sequence spans 87 residues: Elongation factor Ts, chloroplastic (87 aa).

The protein belongs to the EF-Ts family.

It localises to the plastid. The protein localises to the chloroplast. In terms of biological role, associates with the EF-Tu.GDP complex and induces the exchange of GDP to GTP. It remains bound to the aminoacyl-tRNA.EF-Tu.GTP complex up to the GTP hydrolysis stage on the ribosome. The polypeptide is Elongation factor Ts, chloroplastic (tsf) (Antithamnion sp. (Red alga)).